Consider the following 87-residue polypeptide: Large ribosomal subunit protein eL20 (87 aa).

It belongs to the eukaryotic ribosomal protein eL20 family. Part of the 50S ribosomal subunit. Binds 23S rRNA.

The polypeptide is Large ribosomal subunit protein eL20 (Hyperthermus butylicus (strain DSM 5456 / JCM 9403 / PLM1-5)).